Consider the following 166-residue polypeptide: Lipoprotein signal peptidase (166 aa).

The next 4 membrane-spanning stretches (helical) occupy residues 9 to 29 (ASGALAPWLGISLIVILFDQL), 45 to 65 (ALTSFFSLVLVYNRGAAFGFL), 71 to 91 (WQRWAFTALGIGATLVICFLL), and 100 to 120 (FSLSLALILGGALGNVIDRLV). Residues aspartate 126 and aspartate 144 contribute to the active site. A helical membrane pass occupies residues 135 to 155 (WHFPAFNLADSAITVGAVLLV).

The protein belongs to the peptidase A8 family.

It is found in the cell inner membrane. The catalysed reaction is Release of signal peptides from bacterial membrane prolipoproteins. Hydrolyzes -Xaa-Yaa-Zaa-|-(S,diacylglyceryl)Cys-, in which Xaa is hydrophobic (preferably Leu), and Yaa (Ala or Ser) and Zaa (Gly or Ala) have small, neutral side chains.. It participates in protein modification; lipoprotein biosynthesis (signal peptide cleavage). In terms of biological role, this protein specifically catalyzes the removal of signal peptides from prolipoproteins. The protein is Lipoprotein signal peptidase of Burkholderia ambifaria (strain MC40-6).